Reading from the N-terminus, the 314-residue chain is uncharacterized protein (314 aa).

The tract at residues 1 to 70 (MAGNSQRRGA…QGRHKKTDDT (70 aa)) is disordered. A compositionally biased stretch (basic residues) spans 43–65 (QRPHHPAGKRAAKAARQAQGRHK). Gly265, Ile285, and Leu294 together coordinate S-adenosyl-L-methionine.

Belongs to the class IV-like SAM-binding methyltransferase superfamily. RNA methyltransferase TrmH family.

This is an uncharacterized protein from Mycolicibacterium vanbaalenii (strain DSM 7251 / JCM 13017 / BCRC 16820 / KCTC 9966 / NRRL B-24157 / PYR-1) (Mycobacterium vanbaalenii).